The primary structure comprises 516 residues: Rho guanine nucleotide exchange factor 9 (516 aa).

The SH3 domain occupies 8-67 (DSIVSAEAVWDHVTMANRELAFKAGDVIKVLDASNKDWWWGQIDDEEGWFPASFVRLWVN). The segment at 100–110 (RDQMRANVINE) is interaction with GPHN. In terms of domain architecture, DH spans 103–287 (MRANVINEIM…RNVTQQINER (185 aa)). The 108-residue stretch at 318-425 (ELIYTGEMAW…WLRAFREERK (108 aa)) folds into the PH domain. The disordered stretch occupies residues 450-480 (RKASKQKGVNSARSVPPSYPPPQDPLNQGQY). Serine 502 is subject to Phosphoserine.

As to quaternary structure, interacts with GPHN. In terms of tissue distribution, detected in embryonic and adult brain.

The protein resides in the cytoplasm. The protein localises to the postsynaptic density. Functionally, acts as a guanine nucleotide exchange factor (GEF) for CDC42. Promotes formation of GPHN clusters. This is Rho guanine nucleotide exchange factor 9 (Arhgef9) from Mus musculus (Mouse).